Reading from the N-terminus, the 525-residue chain is Retinoblastoma-binding-like protein E (525 aa).

WD repeat units follow at residues 25–66 (PKNI…IVRT), 69–108 (HHTG…ILYS), 222–261 (SSNT…LYQQ), 267–312 (DSVN…KDLE), and 313–352 (GPKE…NWSS). Disordered stretches follow at residues 371 to 398 (DEFD…RNPY) and 462 to 525 (EKYQ…KKRK). Positions 383–392 (QEVNNNNNNN) are enriched in low complexity. Basic and acidic residues predominate over residues 462-471 (EKYQKDKEDS). The segment covering 472-500 (SSTTSNSTISSSSSPSPSSSSTTTTTTTS) has biased composition (low complexity). Residues 501 to 525 (QKKDETQKKEKSTKKERNSDSKKRK) show a composition bias toward basic and acidic residues.

Its subcellular location is the nucleus. In terms of biological role, involved in mono-, di- and trimethylation at 'Lys-4' of histone H3. Histone H3 'Lys-4' methylation represents a specific tag for epigenetic transcriptional activation. In Dictyostelium discoideum (Social amoeba), this protein is Retinoblastoma-binding-like protein E.